A 119-amino-acid chain; its full sequence is MTSLFSESETEIVSTTYMFLTQDEMKGKAGTLNQPINDFLSLTKKFESSLKEEIKGQKGLIVKKIKKELESNSEKRKAALQMIKEEHTAKVDRYKMIIEDLRQQDVTLTYRKKKPVKDV.

Positions 63 to 104 (KKIKKELESNSEKRKAALQMIKEEHTAKVDRYKMIIEDLRQQ) form a coiled coil.

This is an uncharacterized protein from Bacillus subtilis (strain 168).